The chain runs to 193 residues: Cryptic protein (193 aa).

The N-terminal stretch at 1–25 (MFWRKHVRILFTVTLIWQAIHLGKG) is a signal peptide. Asn38 and Asn60 each carry an N-linked (GlcNAc...) asparagine glycan. 2 disulfide bridges follow: Cys91–Cys103 and Cys105–Cys114. The 25-residue stretch at 91-115 (CQNGGTCILGAFCACPKHFSGRHCE) folds into the EGF-like domain.

This sequence belongs to the EGF-CFC (Cripto-1/FRL1/Cryptic) family.

The protein localises to the cell membrane. Its subcellular location is the secreted. May play a role in mesoderm and/or neural patterning during gastrulation. This Gallus gallus (Chicken) protein is Cryptic protein (CFC1).